Reading from the N-terminus, the 447-residue chain is Tubulin beta-5 chain (447 aa).

GTP contacts are provided by Q11, E69, S138, G142, T143, G144, N204, and N226. E69 is a binding site for Mg(2+). The disordered stretch occupies residues 424–447 (QYQDATAEEEGEFDEDEELDDAMG). Acidic residues predominate over residues 429-447 (TAEEEGEFDEDEELDDAMG).

The protein belongs to the tubulin family. In terms of assembly, dimer of alpha and beta chains. A typical microtubule is a hollow water-filled tube with an outer diameter of 25 nm and an inner diameter of 15 nM. Alpha-beta heterodimers associate head-to-tail to form protofilaments running lengthwise along the microtubule wall with the beta-tubulin subunit facing the microtubule plus end conferring a structural polarity. Microtubules usually have 13 protofilaments but different protofilament numbers can be found in some organisms and specialized cells. The cofactor is Mg(2+).

The protein resides in the cytoplasm. It is found in the cytoskeleton. In terms of biological role, tubulin is the major constituent of microtubules, a cylinder consisting of laterally associated linear protofilaments composed of alpha- and beta-tubulin heterodimers. Microtubules grow by the addition of GTP-tubulin dimers to the microtubule end, where a stabilizing cap forms. Below the cap, tubulin dimers are in GDP-bound state, owing to GTPase activity of alpha-tubulin. The sequence is that of Tubulin beta-5 chain (TUBB5) from Ectocarpus variabilis (Brown alga).